Reading from the N-terminus, the 258-residue chain is MLLAMDIGNTNTVLGLFNEQRLVHDWRIRTEVNTTVDEYGIAIRSLFDAHGFFVADVGSVIISCVVPPVLNSIERFCRKYFNIQPIIVGPGIRTGMPIFYDNPKEVGADRIVNAVAAYDYYRCATIVVDFGTATTFDYISDKGEYMGGVISPGIMISCEALFFKTSKLPRVEIFARPPSVLAKNTIASMNAGIVYGYAGLVEGIITRMRNEIGTNLKVVATGGLAALIASECSLIDDVDDYLTLKGLRIIFERNKKNP.

Asp-6–Val-13 lines the ATP pocket. Residues Tyr-100 and Gly-107–Arg-110 each bind substrate. The active-site Proton acceptor is Asp-109. Position 129 (Asp-129) interacts with K(+). Thr-132 contacts ATP. Thr-185 provides a ligand contact to substrate.

Belongs to the type III pantothenate kinase family. In terms of assembly, homodimer. NH4(+) is required as a cofactor. K(+) serves as cofactor.

The protein resides in the cytoplasm. The enzyme catalyses (R)-pantothenate + ATP = (R)-4'-phosphopantothenate + ADP + H(+). Its pathway is cofactor biosynthesis; coenzyme A biosynthesis; CoA from (R)-pantothenate: step 1/5. In terms of biological role, catalyzes the phosphorylation of pantothenate (Pan), the first step in CoA biosynthesis. In Syntrophobacter fumaroxidans (strain DSM 10017 / MPOB), this protein is Type III pantothenate kinase.